The following is a 157-amino-acid chain: MLRQFLFSTASRRLVRPMIAPHRSASSSLDKTEFTTPSQIVDYDDPPHLPVPEYPLRPDEPLETRKQRLLYQSRKRGMLENDLLLSTFVAKHLRDFSAAQTAQYDDLINGVSNDWDIFYWATETKPTPPQYDTEIMRMLKQHVKNEERVQRIRQPDL.

Residues 1–24 constitute a mitochondrion transit peptide; that stretch reads MLRQFLFSTASRRLVRPMIAPHRS.

The protein belongs to the SDHAF2 family. Interacts with the flavoprotein subunit within the SDH catalytic dimer.

It is found in the mitochondrion matrix. Its function is as follows. Plays an essential role in the assembly of succinate dehydrogenase (SDH), an enzyme complex (also referred to as respiratory complex II) that is a component of both the tricarboxylic acid (TCA) cycle and the mitochondrial electron transport chain, and which couples the oxidation of succinate to fumarate with the reduction of ubiquinone (coenzyme Q) to ubiquinol. Required for flavinylation (covalent attachment of FAD) of the flavoprotein subunit of the SDH catalytic dimer. The sequence is that of Succinate dehydrogenase assembly factor 2-B, mitochondrial from Drosophila persimilis (Fruit fly).